Consider the following 320-residue polypeptide: Beta-ketoacyl-[acyl-carrier-protein] synthase III (320 aa).

Residues C114 and H247 contribute to the active site. An ACP-binding region spans residues 248–252 (QANRR). The active site involves N277.

The protein belongs to the thiolase-like superfamily. FabH family. As to quaternary structure, homodimer.

The protein localises to the cytoplasm. The catalysed reaction is malonyl-[ACP] + acetyl-CoA + H(+) = 3-oxobutanoyl-[ACP] + CO2 + CoA. The protein operates within lipid metabolism; fatty acid biosynthesis. Catalyzes the condensation reaction of fatty acid synthesis by the addition to an acyl acceptor of two carbons from malonyl-ACP. Catalyzes the first condensation reaction which initiates fatty acid synthesis and may therefore play a role in governing the total rate of fatty acid production. Possesses both acetoacetyl-ACP synthase and acetyl transacylase activities. Its substrate specificity determines the biosynthesis of branched-chain and/or straight-chain of fatty acids. This Neisseria gonorrhoeae (strain ATCC 700825 / FA 1090) protein is Beta-ketoacyl-[acyl-carrier-protein] synthase III.